The sequence spans 173 residues: Putative metal-dependent hydrolase BcerKBAB4_2443 (173 aa).

Residues His-65, His-156, and His-160 each contribute to the Zn(2+) site.

Belongs to the metal hydrolase YfiT family. As to quaternary structure, homodimer. The cofactor is Zn(2+).

It is found in the cytoplasm. Functionally, possible metal-dependent hydrolase. The chain is Putative metal-dependent hydrolase BcerKBAB4_2443 from Bacillus mycoides (strain KBAB4) (Bacillus weihenstephanensis).